Here is a 215-residue protein sequence, read N- to C-terminus: Adenylate kinase (215 aa).

10–15 (GAGKGT) is a binding site for ATP. The interval 30 to 59 (STGDMLRAAVKAGTELGLKAKSVMDSGGLV) is NMP. AMP contacts are provided by residues T31, R36, 57 to 59 (GLV), 85 to 88 (GFPR), and Q92. The interval 122–159 (GRRVHEASGRVYHTVYNPPKIAGKDDITGEDLVQRKDD) is LID. Residues R123 and 132–133 (VY) contribute to the ATP site. Positions 156 and 167 each coordinate AMP. G201 contributes to the ATP binding site.

Belongs to the adenylate kinase family. In terms of assembly, monomer.

It localises to the cytoplasm. The enzyme catalyses AMP + ATP = 2 ADP. It functions in the pathway purine metabolism; AMP biosynthesis via salvage pathway; AMP from ADP: step 1/1. Its function is as follows. Catalyzes the reversible transfer of the terminal phosphate group between ATP and AMP. Plays an important role in cellular energy homeostasis and in adenine nucleotide metabolism. This Pseudomonas fluorescens (strain ATCC BAA-477 / NRRL B-23932 / Pf-5) protein is Adenylate kinase.